Reading from the N-terminus, the 168-residue chain is Small ribosomal subunit protein bS16 (168 aa).

A disordered region spans residues 110 to 168 (LSEANNGPTAEAITEKKKKAREEKEAKEAAEKAAAEKAAAAEAEASEEAPAEEAASEEA). A compositionally biased stretch (basic and acidic residues) spans 129-144 (AREEKEAKEAAEKAAA). Residues 153–168 (EASEEAPAEEAASEEA) show a composition bias toward acidic residues.

It belongs to the bacterial ribosomal protein bS16 family.

The protein is Small ribosomal subunit protein bS16 of Corynebacterium efficiens (strain DSM 44549 / YS-314 / AJ 12310 / JCM 11189 / NBRC 100395).